The sequence spans 561 residues: Cation diffusion facilitator family protein 1 (561 aa).

Over residues 1-20 (MEVTMEDRSVKADKADRDDN) the composition is skewed to basic and acidic residues. The tract at residues 1 to 26 (MEVTMEDRSVKADKADRDDNNTTSTE) is disordered. Topologically, residues 1–112 (MEVTMEDRSV…SESVKGVSRS (112 aa)) are cytoplasmic. A helical transmembrane segment spans residues 113–133 (LIIQIGMTVIFCALEFITGVV). The Extracellular portion of the chain corresponds to 134–136 (CSS). The helical transmembrane segment at 137–157 (IAMLADSYHMAADVMALIVAF) threads the bilayer. Topologically, residues 158–176 (TCIKIATRPSTRLGYGWVR) are cytoplasmic. A helical membrane pass occupies residues 177 to 197 (AETLGGFFNGIFMCTVCVLVF). At 198 to 215 (QEAVGRIINVHMITHPLQ) the chain is on the extracellular side. Residues 216–236 (VLVIGFIGLLINLFGMFNLSG) traverse the membrane as a helical segment. The Cytoplasmic segment spans residues 237 to 391 (HGHSHGGGSH…NVNIHGVWLH (155 aa)). Residues 240-304 (SHGGGSHGHS…HTRLNGKFRS (65 aa)) form a disordered region. The segment at 246–270 (HGHSHGGSHGHSHNNKKTKKNDGHG) is 6 X 2 AA approximate repeats of H-G. Over residues 247-264 (GHSHGGSHGHSHNNKKTK) the composition is skewed to basic residues. The chain crosses the membrane as a helical span at residues 392 to 412 (LLSDAFGSVIVMISAGFVYFL). Residues 413–420 (PTWKIAAY) lie on the Extracellular side of the membrane. The chain crosses the membrane as a helical span at residues 421–441 (LDPILSISLASIMGFTAVVLV). Over 442-561 (KTSGEKLLKQ…SVSTENEITE (120 aa)) the chain is Cytoplasmic.

It belongs to the cation diffusion facilitator (CDF) transporter (TC 2.A.4) family. SLC30A subfamily. Interacts with lin-45 in a zinc-dependent manner. In terms of tissue distribution, expressed in intestinal cells. Expressed in the vulva.

It localises to the basolateral cell membrane. Functionally, involved in the regulation of Pn.p cell fate determination. Involved in zinc metabolism and the decrease of the cytosolic zinc concentration which is thought to modulate Ras signaling. Involved in zinc transport from the intestinal lumen to the pseudocoelum. The sequence is that of Cation diffusion facilitator family protein 1 (cdf-1) from Caenorhabditis elegans.